We begin with the raw amino-acid sequence, 243 residues long: DNA repair protein RecO (243 aa).

The protein belongs to the RecO family.

In terms of biological role, involved in DNA repair and RecF pathway recombination. The protein is DNA repair protein RecO of Xylella fastidiosa (strain M23).